Consider the following 509-residue polypeptide: Methylmalonyl-CoA decarboxylase subunit alpha (509 aa).

Residues 4 to 260 (VQEKIELLHE…NNMEDAPLVD (257 aa)) enclose the CoA carboxyltransferase N-terminal domain. Residues 267-503 (REDESLNSLL…SKRENRAPKK (237 aa)) enclose the CoA carboxyltransferase C-terminal domain.

It belongs to the AccD/PCCB family. In terms of assembly, the methylmalonyl-CoA decarboxylase is composed of five subunits: the carboxyltransferase alpha subunit (MmdA), the tunnel beta subunit (MmdB), the biotin-containing gamma subunit (MmdC), and the delta (MmdD) and epsilon (MmdE) subunits. Interacts with the gamma subunit.

It is found in the cell membrane. It carries out the reaction (S)-methylmalonyl-CoA + Na(+)(in) + H(+)(out) = propanoyl-CoA + Na(+)(out) + CO2. Its activity is regulated as follows. Completely inhibited by avidin. Its function is as follows. Carboxyltransferase subunit of the sodium ion pump methylmalonyl-CoA decarboxylase, which converts the chemical energy of a decarboxylation reaction into an electrochemical gradient of Na(+) ions across the cytoplasmic membrane, thereby creating a sodium ion motive force that is used for ATP synthesis. The alpha subunit catalyzes the Na(+)-independent carboxyltransfer from methylmalonyl-CoA to the prosthetic biotin group located on the gamma subunit. Can also convert malonyl-CoA into acetyl-CoA. This Veillonella parvula (Staphylococcus parvulus) protein is Methylmalonyl-CoA decarboxylase subunit alpha.